The sequence spans 215 residues: Cytochrome b6 (215 aa).

The chain crosses the membrane as a helical span at residues I32–F52. C35 is a heme c binding site. Heme b is bound by residues H86 and H100. Transmembrane regions (helical) follow at residues A90–F110, L116–Y136, and L186–I206. Heme b-binding residues include H187 and H202.

This sequence belongs to the cytochrome b family. PetB subfamily. As to quaternary structure, the 4 large subunits of the cytochrome b6-f complex are cytochrome b6, subunit IV (17 kDa polypeptide, PetD), cytochrome f and the Rieske protein, while the 4 small subunits are PetG, PetL, PetM and PetN. The complex functions as a dimer. The cofactor is heme b. Requires heme c as cofactor.

The protein localises to the plastid. It localises to the chloroplast thylakoid membrane. Its function is as follows. Component of the cytochrome b6-f complex, which mediates electron transfer between photosystem II (PSII) and photosystem I (PSI), cyclic electron flow around PSI, and state transitions. This Vitis vinifera (Grape) protein is Cytochrome b6.